A 511-amino-acid chain; its full sequence is Maturase K (511 aa).

This sequence belongs to the intron maturase 2 family. MatK subfamily.

It is found in the plastid. The protein resides in the chloroplast. In terms of biological role, usually encoded in the trnK tRNA gene intron. Probably assists in splicing its own and other chloroplast group II introns. The sequence is that of Maturase K from Brachypodium sylvaticum (False brome).